The sequence spans 190 residues: Imidazoleglycerol-phosphate dehydratase (190 aa).

Belongs to the imidazoleglycerol-phosphate dehydratase family.

The protein localises to the cytoplasm. It carries out the reaction D-erythro-1-(imidazol-4-yl)glycerol 3-phosphate = 3-(imidazol-4-yl)-2-oxopropyl phosphate + H2O. The protein operates within amino-acid biosynthesis; L-histidine biosynthesis; L-histidine from 5-phospho-alpha-D-ribose 1-diphosphate: step 6/9. In Methanococcus maripaludis (strain C7 / ATCC BAA-1331), this protein is Imidazoleglycerol-phosphate dehydratase.